The chain runs to 988 residues: Ephrin type-B receptor 3 (988 aa).

The tract at residues 1–24 (GVSSRARRPPGSSRSSRRGVTSEL) is disordered. At 1 to 534 (GVSSRARRPP…TSKTFQELPL (534 aa)) the chain is on the extracellular side. The region spanning 11–189 (GSSRSSRRGV…FYKKCSNTIA (179 aa)) is the Eph LBD domain. A disulfide bridge links C53 with C171. 2 Fibronectin type-III domains span residues 311 to 424 (VPSA…TNQA) and 425 to 522 (APSA…TAED). 2 N-linked (GlcNAc...) asparagine glycosylation sites follow: N323 and N418. The chain crosses the membrane as a helical span at residues 535-555 (IVGSATAGLLFVIVVVIIAIV). At 556–988 (CFRKGMVTEQ…QMNQTLPVQV (433 aa)) the chain is on the cytoplasmic side. Y604 is subject to Phosphotyrosine; by autocatalysis. The Protein kinase domain occupies 623-886 (VKIEEVIGAG…QIVNTLDKLI (264 aa)). Residues 629-637 (IGAGEFGEV) and K655 contribute to the ATP site. Residue D748 is the Proton acceptor of the active site. One can recognise an SAM domain in the interval 915-979 (TTFTTVGDWL…LSSIQDMRLQ (65 aa)). Residues 986-988 (VQV) carry the PDZ-binding motif.

The protein belongs to the protein kinase superfamily. Tyr protein kinase family. Ephrin receptor subfamily. In terms of assembly, heterotetramer upon binding of the ligand. The heterotetramer is composed of an ephrin dimer and a receptor dimer. Oligomerization is probably required to induce biological responses. Post-translationally, phosphorylated. Autophosphorylates upon ligand-binding. Autophosphorylation on Tyr-604 is required for interaction with SH2 domain-containing proteins. In terms of tissue distribution, present in 10-day embryonic brain and body tissues. Prominent expression in kidney. Lower expression in lung, and barely detectable in brain, liver, heart, skeletal muscle and thymus.

Its subcellular location is the cell membrane. The protein localises to the cell projection. The protein resides in the dendrite. The catalysed reaction is L-tyrosyl-[protein] + ATP = O-phospho-L-tyrosyl-[protein] + ADP + H(+). In terms of biological role, receptor tyrosine kinase which binds promiscuously transmembrane ephrin-B family ligands residing on adjacent cells, leading to contact-dependent bidirectional signaling into neighboring cells. The signaling pathway downstream of the receptor is referred to as forward signaling while the signaling pathway downstream of the ephrin ligand is referred to as reverse signaling. Generally has an overlapping and redundant function with EPHB2. Like EPHB2, functions in axon guidance during development. In addition to its role in axon guidance also plays an important redundant role with other ephrin-B receptors in development and maturation of dendritic spines and the formation of excitatory synapses. May control other aspects of development through regulation of cell migration and positioning. The sequence is that of Ephrin type-B receptor 3 (EPHB3) from Gallus gallus (Chicken).